We begin with the raw amino-acid sequence, 570 residues long: MGNWAVNEGLSIFVILVWLGLNVFLFINYYKVYDDGPKYNYTRKLLGSALALARAPAACLNFNCMLILLPVCRNLLSFLRGSSACCSTRIRRQLDRNLTFHKMVAWMIALHTAIHTIAHLFNVEWCVNARVGISDRYSIALSDIGDNENEEYLNFAREKIKNPEGGLYVAVTRLAGITGIVITLCLILIITSSTKTIRRSYFEVFWYTHHLFVIFFIGLAIHGAERIVRGQTAESLEEHNLDICADKIEEWGKIKECPVPKFAGNPPMTWKWIVGPMFLYLCERLVRFWRSQQKVVITKVVTHPFKTIELQMKKKGFKMEVGQYIFVKCPKVSKLEWHPFTLTSAPEEDFFSIHIRIVGDWTEGLFNACGCDKQEFQDAWKLPKIAVDGPFGTASEDVFSYEVVMLVGAGIGVTPFASILKSVWYKYCDNATSLKLKKIYFYWLCRDTHAFEWFADLLQLLETQMQERNNANFLSYNIYLTGWDESQANHFAVHHDEEKDVITGLKQKTLYGRPNWDNEFKTIASEHPNTTIGVFLCGPEALAETLSKQSISNSESGPRGVHFIFNKENF.

Residues 2–9 lie on the Cytoplasmic side of the membrane; the sequence is GNWAVNEG. A helical membrane pass occupies residues 10–36; the sequence is LSIFVILVWLGLNVFLFINYYKVYDDG. The Extracellular portion of the chain corresponds to 37–46; it reads PKYNYTRKLL. A glycan (N-linked (GlcNAc...) asparagine) is linked at N40. A helical membrane pass occupies residues 47–72; it reads GSALALARAPAACLNFNCMLILLPVC. The 233-residue stretch at 54–286 folds into the Ferric oxidoreductase domain; it reads RAPAACLNFN…MFLYLCERLV (233 aa). At 73–95 the chain is on the cytoplasmic side; the sequence is RNLLSFLRGSSACCSTRIRRQLD. A helical transmembrane segment spans residues 96-130; the sequence is RNLTFHKMVAWMIALHTAIHTIAHLFNVEWCVNAR. Heme b contacts are provided by H101 and H115. Residues 131–163 lie on the Extracellular side of the membrane; sequence VGISDRYSIALSDIGDNENEEYLNFAREKIKNP. Residues K159 and K161 each participate in a glycyl lysine isopeptide (Lys-Gly) (interchain with G-Cter in ubiquitin) cross-link. Residues 164–194 form a helical membrane-spanning segment; it reads EGGLYVAVTRLAGITGIVITLCLILIITSST. Residues 195–203 are Cytoplasmic-facing; the sequence is KTIRRSYFE. FAD-binding residues include R199 and S200. Residues 204 to 222 traverse the membrane as a helical segment; sequence VFWYTHHLFVIFFIGLAIH. Heme b-binding residues include W206, H209, H222, R226, and I227. The Extracellular portion of the chain corresponds to 223–267; that stretch reads GAERIVRGQTAESLEEHNLDICADKIEEWGKIKECPVPKFAGNPP. K255 is covalently cross-linked (Glycyl lysine isopeptide (Lys-Gly) (interchain with G-Cter in ubiquitin)). Residues M268, Y280, and R287 each coordinate heme b. A helical transmembrane segment spans residues 268–285; that stretch reads MTWKWIVGPMFLYLCERL. Residues 286 to 570 lie on the Cytoplasmic side of the membrane; sequence VRFWRSQQKV…VHFIFNKENF (285 aa). The region spanning 287–397 is the FAD-binding FR-type domain; the sequence is RFWRSQQKVV…DGPFGTASED (111 aa). Glycyl lysine isopeptide (Lys-Gly) (interchain with G-Cter in ubiquitin) cross-links involve residues K294, K299, K306, K328, and K334. Residues W337, H338, P339, T341, H354, R356, W361, and T362 each contribute to the FAD site. K381 participates in a covalent cross-link: Glycyl lysine isopeptide (Lys-Gly) (interchain with G-Cter in ubiquitin). 3 residues coordinate NADPH: I411, R446, and T481. A Glycyl lysine isopeptide (Lys-Gly) (interchain with G-Cter in ubiquitin) cross-link involves residue K506. Residue R513 participates in NADPH binding. A Glycyl lysine isopeptide (Lys-Gly) (interchain with G-Cter in ubiquitin) cross-link involves residue K567.

In terms of assembly, component of the phagocyte NADPH oxidase core complex/cytochrome b558 complex, composed of CYBB (heavy chain (beta)) and CYBA (light chain (alpha)). Component of the phagocyte NADPH oxidase complex composed of an obligatory core heterodimer formed by the membrane proteins CYBA and CYBB and the cytosolic regulatory subunits NCF1/p47-phox, NCF2/p67-phox, NCF4/p40-phox and the small GTPase RAC1 or RAC2. Interacts with NCF1 (phosphorylated form). Interacts with NCF2; the interaction is enhanced in the presence of GBP7. Interacts with RAC2. Interacts with RAC1. Interacts with calprotectin (S100A8/9). Interacts with NRROS; the interaction is direct and impairs formation of a stable NADPH oxidase complex. Interacts with CYBC1; CYBC1 may act as a chaperone stabilizing Cytochrome b-245 heterodimer. The CYBA:CYBB complex interacts with GBP7. Requires FAD as cofactor. In terms of processing, glycosylated. Phosphorylated on Ser and Thr residues by PKC during neutrophils activation. Phosphorylation enhances the NADPH oxidase activity and stimulates its interaction with RAC2, NCF2/p67-phox, and NCF1/p47-phox. Post-translationally, undergoes 'Lys-48'-linked polyubiquitination, likely by RNF145, triggering endoplasmic reticulum-associated degradation.

The protein resides in the cell membrane. The enzyme catalyses NADPH + 2 O2 = 2 superoxide + NADP(+) + H(+). In terms of biological role, catalytic subunit of the phagocyte NADPH oxidase complex that mediates the transfer of electrons from cytosolic NADPH to O2 to produce the superoxide anion (O2(-)). In the activated complex, electrons are first transferred from NADPH to flavin adenine dinucleotide (FAD) and subsequently transferred via two heme molecules to molecular oxygen, producing superoxide through an outer-sphere reaction. Activation of the NADPH oxidase complex is initiated by the assembly of cytosolic subunits of the NADPH oxidase complex with the core NADPH oxidase complex to form a complex at the plasma membrane or phagosomal membrane. This activation process is initiated by phosphorylation dependent binding of the cytosolic NCF1/p47-phox subunit to the C-terminus of CYBA/p22-phox. NADPH oxidase complex assembly is impaired through interaction with NRROS. In Mus musculus (Mouse), this protein is NADPH oxidase 2.